The sequence spans 141 residues: Nucleoside diphosphate kinase (141 aa).

ATP-binding residues include Lys-11, Phe-59, Arg-87, Thr-93, Arg-104, and Asn-114. The active-site Pros-phosphohistidine intermediate is His-117.

The protein belongs to the NDK family. Homotetramer. It depends on Mg(2+) as a cofactor.

Its subcellular location is the cytoplasm. It catalyses the reaction a 2'-deoxyribonucleoside 5'-diphosphate + ATP = a 2'-deoxyribonucleoside 5'-triphosphate + ADP. The catalysed reaction is a ribonucleoside 5'-diphosphate + ATP = a ribonucleoside 5'-triphosphate + ADP. In terms of biological role, major role in the synthesis of nucleoside triphosphates other than ATP. The ATP gamma phosphate is transferred to the NDP beta phosphate via a ping-pong mechanism, using a phosphorylated active-site intermediate. The protein is Nucleoside diphosphate kinase of Leptothrix cholodnii (strain ATCC 51168 / LMG 8142 / SP-6) (Leptothrix discophora (strain SP-6)).